We begin with the raw amino-acid sequence, 312 residues long: Acetyl-coenzyme A carboxylase carboxyl transferase subunit alpha (312 aa).

Residues 32 to 286 (LLEERLARLR…KEALLKALEE (255 aa)) enclose the CoA carboxyltransferase C-terminal domain.

The protein belongs to the AccA family. Acetyl-CoA carboxylase is a heterohexamer composed of biotin carboxyl carrier protein (AccB), biotin carboxylase (AccC) and two subunits each of ACCase subunit alpha (AccA) and ACCase subunit beta (AccD).

It is found in the cytoplasm. It catalyses the reaction N(6)-carboxybiotinyl-L-lysyl-[protein] + acetyl-CoA = N(6)-biotinyl-L-lysyl-[protein] + malonyl-CoA. It functions in the pathway lipid metabolism; malonyl-CoA biosynthesis; malonyl-CoA from acetyl-CoA: step 1/1. Component of the acetyl coenzyme A carboxylase (ACC) complex. First, biotin carboxylase catalyzes the carboxylation of biotin on its carrier protein (BCCP) and then the CO(2) group is transferred by the carboxyltransferase to acetyl-CoA to form malonyl-CoA. This chain is Acetyl-coenzyme A carboxylase carboxyl transferase subunit alpha, found in Thermus thermophilus (strain ATCC BAA-163 / DSM 7039 / HB27).